An 81-amino-acid polypeptide reads, in one-letter code: Defensin-like protein 144 (81 aa).

The N-terminal stretch at 1–24 (MKNSFRFSFTVITTFIICVLVSGA) is a signal peptide. Intrachain disulfides connect Cys-30–Cys-74, Cys-42–Cys-61, Cys-47–Cys-69, and Cys-51–Cys-71.

The protein belongs to the DEFL family.

The protein localises to the secreted. This chain is Defensin-like protein 144 (LCR10), found in Arabidopsis thaliana (Mouse-ear cress).